The chain runs to 252 residues: Transmembrane ascorbate-dependent reductase CYB561 (252 aa).

Methionine 1 bears the N-acetylmethionine mark. Topologically, residues 1 to 17 are cytoplasmic; that stretch reads MEGPASPAPAPGALPYY. The chain crosses the membrane as a helical span at residues 18 to 38; sequence VAFSQLLGLTVVAMTGAWLGM. The Cytochrome b561 domain occupies 20–221; that stretch reads FSQLLGLTVV…FATVVLYILT (202 aa). The Vesicular segment spans residues 39–52; sequence YRGGIAWESALQFN. The chain crosses the membrane as a helical span at residues 53–73; the sequence is VHPLCMVIGLVFLQGDALLVY. Residues histidine 54, arginine 74, and lysine 81 each coordinate heme b. Over 74–86 the chain is Cytoplasmic; sequence RVFRNEAKRTTKV. Positions 81 and 85 each coordinate L-ascorbate. A helical transmembrane segment spans residues 87 to 107; sequence LHGLLHVFAFVIALVGLVAVF. Residues histidine 88, 117–120, and histidine 122 contribute to the heme b site; that span reads DLYS. Topologically, residues 108–125 are vesicular; that stretch reads EHHRKKGYADLYSLHSWC. Residues 126–146 traverse the membrane as a helical segment; it reads GILVFALFFAQWLVGFSFFLF. The Cytoplasmic segment spans residues 147-159; it reads PGASFSLRSRYRP. Residue arginine 154 coordinates L-ascorbate. The chain crosses the membrane as a helical span at residues 160–180; sequence QHVFFGAAIFLLSVATALLGL. Positions 161 and 182 each coordinate heme b. Residues 181–199 are Vesicular-facing; that stretch reads KEALLFELGTKYSTFEPEG. The chain crosses the membrane as a helical span at residues 200 to 220; that stretch reads VLANVLGLLLAAFATVVLYIL. At 221-252 the chain is on the cytoplasmic side; sequence TRADWKRPLQAEEQALSMDFKTLTEGDSPSSQ. Lysine 226 contacts heme b. 2 positions are modified to phosphoserine: serine 248 and serine 250.

Requires heme b as cofactor.

Its subcellular location is the cytoplasmic vesicle. It localises to the secretory vesicle. It is found in the chromaffin granule membrane. It carries out the reaction monodehydro-L-ascorbate radical(out) + L-ascorbate(in) = monodehydro-L-ascorbate radical(in) + L-ascorbate(out). Its function is as follows. Transmembrane reductase that uses ascorbate as an electron donor in the cytoplasm and transfers electrons across membranes to reduce monodehydro-L-ascorbate radical in the lumen of secretory vesicles. It is therefore involved the regeneration and homeostasis within secretory vesicles of ascorbate which in turn provides reducing equivalents needed to support the activity of intravesicular enzymes. This chain is Transmembrane ascorbate-dependent reductase CYB561 (CYB561), found in Ovis aries (Sheep).